Here is a 506-residue protein sequence, read N- to C-terminus: MAEFKRYLELDISQQHDFIYPLLFQEYIYALAHDHGLNRSIFLENAGYDNKSSLLIGKRLITHLITQMDQQKKFLVPDSDSNQKKNLGYNTNLYSQMIFEGFAVVMEIPFYLRLLSFLEGKERVKSHNXXXXXXXXXXXXXXXXXXXXXXDIQIPHPIHLEILVQTLRYWVKDASSLHLLRFFLHEYPIWNSLITQKKSIFSFSKKNQRFFLFLYNFHVCEYESIFVFLRQPTSHLRSISSETFLERISFYRKIELEVFTKDFKSILWLFKEPFLHYVRYRGKAILASKGTSLLMNKWKYYLLNFWQSYFYMWSQPRRIHINQLSNHFLDFLGYLSSVRLKPLMLRSQMIENSFLIENASKKFDTLMPITPMILSLYKAKFCNVLGHPMSKPAWSGLSDSDIIERFGRIYRNLSHYYSGSLKKMSLYRIKYILRLSCARTLARKRKSTVRAFLKRLGVGLLAEFFTEEEQVFYLTFQKVSFTSGELYRRRIWYLDIICINDLANYE.

This sequence belongs to the intron maturase 2 family. MatK subfamily.

The protein resides in the plastid. It localises to the chloroplast. Functionally, usually encoded in the trnK tRNA gene intron. Probably assists in splicing its own and other chloroplast group II introns. The sequence is that of Maturase K from Phyllodoce caerulea (Blue mountain heath).